The following is a 420-amino-acid chain: tRNA(Ile)-lysidine synthase (420 aa).

28–33 (SGGLDS) lines the ATP pocket.

Belongs to the tRNA(Ile)-lysidine synthase family.

The protein resides in the cytoplasm. The enzyme catalyses cytidine(34) in tRNA(Ile2) + L-lysine + ATP = lysidine(34) in tRNA(Ile2) + AMP + diphosphate + H(+). Functionally, ligates lysine onto the cytidine present at position 34 of the AUA codon-specific tRNA(Ile) that contains the anticodon CAU, in an ATP-dependent manner. Cytidine is converted to lysidine, thus changing the amino acid specificity of the tRNA from methionine to isoleucine. The protein is tRNA(Ile)-lysidine synthase of Hydrogenovibrio crunogenus (strain DSM 25203 / XCL-2) (Thiomicrospira crunogena).